We begin with the raw amino-acid sequence, 607 residues long: Glutamine--fructose-6-phosphate aminotransferase [isomerizing] (607 aa).

Cys2 serves as the catalytic Nucleophile; for GATase activity. Residues 2–217 (CGIIGIIGND…DGDWAVLTRN (216 aa)) form the Glutamine amidotransferase type-2 domain. SIS domains follow at residues 283-422 (IGID…ARGA) and 455-597 (VCHD…VDQP). Lys602 functions as the For Fru-6P isomerization activity in the catalytic mechanism.

In terms of assembly, homodimer.

It localises to the cytoplasm. It catalyses the reaction D-fructose 6-phosphate + L-glutamine = D-glucosamine 6-phosphate + L-glutamate. Functionally, catalyzes the first step in hexosamine metabolism, converting fructose-6P into glucosamine-6P using glutamine as a nitrogen source. The sequence is that of Glutamine--fructose-6-phosphate aminotransferase [isomerizing] from Brucella melitensis biotype 1 (strain ATCC 23456 / CCUG 17765 / NCTC 10094 / 16M).